The sequence spans 314 residues: MNQTPGSTVPETATPVTSPASSPSAPETTFTPVIITGMSGAGLSTAARVLEDLGWFVTHNLPPQMILPLVEMCAREDSPVDKVAVVCDVRSREFRGGLRETITELEEKNLAPTVLFLDARDDELIRRFDNVRRTHPLQGSQTLQVGIERERQMLSDLKEEADVVIDTSELSVHDLRRAIESSFRTIAKRVQHVTIESFGFKHGSPRDADFIIDARFLPNPFWVPELRPFRGVDKPVSDYVLSQKGAGEFLDNFIAMLDDMLPGYRHEGKNFITVGIGCTGGHHRSVAVSEELARRLGERPDLDVSVVHRDINRN.

The segment at 1-29 (MNQTPGSTVPETATPVTSPASSPSAPETT) is disordered. Residues 7–29 (STVPETATPVTSPASSPSAPETT) show a composition bias toward low complexity. 37–44 (GMSGAGLS) lines the ATP pocket. 88-91 (DVRS) lines the GTP pocket.

It belongs to the RapZ-like family.

Its function is as follows. Displays ATPase and GTPase activities. The sequence is that of Nucleotide-binding protein CE1710 from Corynebacterium efficiens (strain DSM 44549 / YS-314 / AJ 12310 / JCM 11189 / NBRC 100395).